Reading from the N-terminus, the 340-residue chain is Hydroxyurea phosphotransferase (340 aa).

The active-site Proton acceptor is the D240.

The protein belongs to the aminoglycoside phosphotransferase family.

Functionally, potential phosphotransferase that inactivates hydroxyurea by phosphorylation of the hydroxy group in the hydroxylamine moiety. This Kitasatospora aureofaciens (Streptomyces aureofaciens) protein is Hydroxyurea phosphotransferase (hur).